A 372-amino-acid polypeptide reads, in one-letter code: Histidinol-phosphate aminotransferase (372 aa).

N6-(pyridoxal phosphate)lysine is present on Lys234.

Belongs to the class-II pyridoxal-phosphate-dependent aminotransferase family. Histidinol-phosphate aminotransferase subfamily. Homodimer. The cofactor is pyridoxal 5'-phosphate.

It carries out the reaction L-histidinol phosphate + 2-oxoglutarate = 3-(imidazol-4-yl)-2-oxopropyl phosphate + L-glutamate. Its pathway is amino-acid biosynthesis; L-histidine biosynthesis; L-histidine from 5-phospho-alpha-D-ribose 1-diphosphate: step 7/9. The polypeptide is Histidinol-phosphate aminotransferase (hisC) (Corynebacterium efficiens (strain DSM 44549 / YS-314 / AJ 12310 / JCM 11189 / NBRC 100395)).